The chain runs to 187 residues: Proline-rich protein 29 (187 aa).

Residues 133–187 (HQPPWQGEPRIQHQPPASRQEEVRDVPPPPPPSATGTVGADVPPASDYYDAESLP) are disordered.

This Mus musculus (Mouse) protein is Proline-rich protein 29 (Prr29).